The primary structure comprises 192 residues: Hydrogenase expression/formation protein HupD (192 aa).

Ni(2+)-binding residues include Glu-23, Asp-69, and His-100.

Belongs to the peptidase A31 family.

In terms of biological role, not known. Could be involved in the processing of hydrogenase. The protein is Hydrogenase expression/formation protein HupD (hupD) of Bradyrhizobium diazoefficiens (strain JCM 10833 / BCRC 13528 / IAM 13628 / NBRC 14792 / USDA 110).